Reading from the N-terminus, the 243-residue chain is MAGHSKWANIKHKKEKMDAKKGRIFTKLTKDIIKAAKEGGGDPETNSKLKLAIERAKAFNLPSENIQRAIKRGTGELGGAKLEEVIYEGYGPAGTAIIVEALTDNKNRTAGEIRHIFDRNGGTLGAAGSVTWMFDKVGVIVVEKTDSINEEDLMMVAIEAGAEDFSADEGEFEIITDPSNFQEVREAIEKAGYKISEAEITMLPKNTIKLSPEDYEKFEKLIDKLEDNDDVQNVYHNVELEDE.

It belongs to the TACO1 family.

Its subcellular location is the cytoplasm. The protein is Probable transcriptional regulatory protein TTE1135 of Caldanaerobacter subterraneus subsp. tengcongensis (strain DSM 15242 / JCM 11007 / NBRC 100824 / MB4) (Thermoanaerobacter tengcongensis).